A 1007-amino-acid polypeptide reads, in one-letter code: Probable inorganic carbon transporter subunit DabA (1007 aa).

Positions 442, 444, 696, and 711 each coordinate Zn(2+).

It belongs to the inorganic carbon transporter (TC 9.A.2) DabA family. Forms a complex with DabB. Requires Zn(2+) as cofactor.

Its subcellular location is the cell inner membrane. Part of an energy-coupled inorganic carbon pump. The protein is Probable inorganic carbon transporter subunit DabA of Aquifex aeolicus (strain VF5).